We begin with the raw amino-acid sequence, 247 residues long: PF03932 family protein CutC (247 aa).

The protein belongs to the CutC family.

Its subcellular location is the cytoplasm. The polypeptide is PF03932 family protein CutC (Chromobacterium violaceum (strain ATCC 12472 / DSM 30191 / JCM 1249 / CCUG 213 / NBRC 12614 / NCIMB 9131 / NCTC 9757 / MK)).